Here is a 226-residue protein sequence, read N- to C-terminus: V-type proton ATPase subunit E 2 (226 aa).

This sequence belongs to the V-ATPase E subunit family. In terms of assembly, V-ATPase is a heteromultimeric enzyme made up of two complexes: the ATP-hydrolytic V1 complex and the proton translocation V0 complex. The V1 complex consists of three catalytic AB heterodimers that form a heterohexamer, three peripheral stalks each consisting of EG heterodimers, one central rotor including subunits D and F, and the regulatory subunits C and H. The proton translocation complex V0 consists of the proton transport subunit a, a ring of proteolipid subunits c9c'', rotary subunit d, subunits e and f, and the accessory subunits ATP6AP1/Ac45 and ATP6AP2/PRR. As to expression, testis specific.

Its function is as follows. Subunit of the V1 complex of vacuolar(H+)-ATPase (V-ATPase), a multisubunit enzyme composed of a peripheral complex (V1) that hydrolyzes ATP and a membrane integral complex (V0) that translocates protons. V-ATPase is responsible for acidifying and maintaining the pH of intracellular compartments and in some cell types, is targeted to the plasma membrane, where it is responsible for acidifying the extracellular environment. This is V-type proton ATPase subunit E 2 (ATP6V1E2) from Homo sapiens (Human).